Reading from the N-terminus, the 364-residue chain is Fructose-bisphosphate aldolase C-A (364 aa).

The substrate site is built by Arg-56 and Lys-147. Glu-188 acts as the Proton acceptor in catalysis. Residue Lys-230 is the Schiff-base intermediate with dihydroxyacetone-P of the active site.

The protein belongs to the class I fructose-bisphosphate aldolase family. Homotetramer. In terms of tissue distribution, expressed specifically in Purkinje cells in the brain.

The enzyme catalyses beta-D-fructose 1,6-bisphosphate = D-glyceraldehyde 3-phosphate + dihydroxyacetone phosphate. It functions in the pathway carbohydrate degradation; glycolysis; D-glyceraldehyde 3-phosphate and glycerone phosphate from D-glucose: step 4/4. This is Fructose-bisphosphate aldolase C-A from Danio rerio (Zebrafish).